The sequence spans 330 residues: Polyprenol dehydrogenase (330 aa).

NAD(+) is bound by residues Ile55, Tyr208, Lys212, and Thr245. Tyr208 functions as the Proton acceptor in the catalytic mechanism.

It belongs to the short-chain dehydrogenases/reductases (SDR) family. Widely expressed. Highly expressed in the pancreas.

The protein localises to the lipid droplet. Its subcellular location is the secreted. It carries out the reaction a di-trans,poly-cis-polyprenol + NAD(+) = a di-trans,poly-cis-polyprenal + NADH + H(+). The catalysed reaction is a di-trans,poly-cis-polyprenol + NADP(+) = a di-trans,poly-cis-polyprenal + NADPH + H(+). It catalyses the reaction a di-trans,poly-cis-dolichol + NADP(+) = a di-trans,poly-cis-dolichal + NADPH + H(+). The enzyme catalyses a di-trans,poly-cis-dolichol + NAD(+) = a di-trans,poly-cis-dolichal + NADH + H(+). It participates in protein modification; protein glycosylation. In terms of biological role, oxidoreductase that plays a key role in early steps of protein N-linked glycosylation by mediating two non-consecutive steps in dolichol biosynthesis. Acts both as a NAD(+)-dependent dehydrogenase and as a NADPH-dependent reductase during the conversion of polyprenol into dolichol. First catalyzes the NAD(+)-dependent dehydrogenation of polyprenol into polyprenal; polyprenal is then reduced into dolichal by SRD5A3. It then catalyzes the NADPH-dependent reduction of dolichal into dolichol. May also acts as a positive regulator of starvation-induced autophagy. This chain is Polyprenol dehydrogenase, found in Homo sapiens (Human).